We begin with the raw amino-acid sequence, 71 residues long: uncharacterized protein (71 aa).

The chain crosses the membrane as a helical span at residues L44 to F66.

The protein resides in the membrane. This is an uncharacterized protein from Saccharomyces cerevisiae (strain ATCC 204508 / S288c) (Baker's yeast).